A 569-amino-acid chain; its full sequence is Urease subunit alpha (569 aa).

The region spanning 131–569 is the Urease domain; it reads GGIDTHIHFI…LPLAQRYLLL (439 aa). Residues His136, His138, and Lys219 each contribute to the Ni(2+) site. Lys219 carries the post-translational modification N6-carboxylysine. Residue His221 participates in substrate binding. Residues His248 and His274 each contribute to the Ni(2+) site. His322 (proton donor) is an active-site residue. Asp362 contributes to the Ni(2+) binding site.

This sequence belongs to the metallo-dependent hydrolases superfamily. Urease alpha subunit family. As to quaternary structure, heterotrimer of UreA (gamma), UreB (beta) and UreC (alpha) subunits. Three heterotrimers associate to form the active enzyme. Ni cation is required as a cofactor. In terms of processing, carboxylation allows a single lysine to coordinate two nickel ions.

Its subcellular location is the cytoplasm. It catalyses the reaction urea + 2 H2O + H(+) = hydrogencarbonate + 2 NH4(+). Its pathway is nitrogen metabolism; urea degradation; CO(2) and NH(3) from urea (urease route): step 1/1. The protein is Urease subunit alpha of Synechococcus sp. (strain WH7805).